The sequence spans 827 residues: Transcription factor SOX-6 (827 aa).

A compositionally biased stretch (polar residues) spans 1 to 10 (MSSKQATSPF). Residues 1–51 (MSSKQATSPFACTADGEEAMTQDLTSREKEEGSDQHPASHLPLHPIMHNKP) form a disordered region. The segment covering 25-34 (TSREKEEGSD) has biased composition (basic and acidic residues). Residue Thr119 is modified to Phosphothreonine. Residues 184–262 (LAEKERQLST…LLQQQIQVQG (79 aa)) adopt a coiled-coil conformation. Disordered stretches follow at residues 334–361 (QINP…GHSY) and 379–470 (VSPG…PIGG). Over residues 341 to 357 (GISDRFGRNLDPSEHGG) the composition is skewed to basic and acidic residues. Ser399 carries the phosphoserine modification. Thr401 carries the phosphothreonine modification. Glycyl lysine isopeptide (Lys-Gly) (interchain with G-Cter in SUMO) cross-links involve residues Lys404 and Lys417. Composition is skewed to polar residues over residues 421 to 431 (TAQPLNLSSRP) and 439 to 461 (SPTS…LPNK). A phosphoserine mark is found at Ser439 and Ser442. The segment at residues 620–688 (IKRPMNAFMV…IHLEKYPNYK (69 aa)) is a DNA-binding region (HMG box). Disordered regions lie at residues 752–772 (TPSP…EPSL) and 786–827 (ASLA…VSAN). Acidic residues predominate over residues 795 to 808 (NGEDEMEAYDDYED).

As to quaternary structure, homodimer. Interacts with DAZAP2. May interact with CENPK. Sumoylation inhibits the transcriptional activity. As to expression, highly expressed in testis.

It is found in the nucleus. The protein localises to the cytoplasm. In terms of biological role, transcription factor that plays a key role in several developmental processes, including neurogenesis, chondrocytes differentiation and cartilage formation. Specifically binds the 5'-AACAAT-3' DNA motif present in enhancers and super-enhancers and promotes expression of genes important for chondrogenesis. Required for overt chondrogenesis when condensed prechondrocytes differentiate into early stage chondrocytes: SOX5 and SOX6 cooperatively bind with SOX9 on active enhancers and super-enhancers associated with cartilage-specific genes, and thereby potentiate SOX9's ability to transactivate. Not involved in precartilaginous condensation, the first step in chondrogenesis, during which skeletal progenitors differentiate into prechondrocytes. Together with SOX5, required to form and maintain a pool of highly proliferating chondroblasts between epiphyses and metaphyses, to form columnar chondroblasts, delay chondrocyte prehypertrophy but promote hypertrophy, and to delay terminal differentiation of chondrocytes on contact with ossification fronts. Binds to the proximal promoter region of the myelin protein MPZ gene, and is thereby involved in the differentiation of oligodendroglia in the developing spinal tube. Binds to the gene promoter of MBP and acts as a transcriptional repressor. The chain is Transcription factor SOX-6 from Mus musculus (Mouse).